Consider the following 80-residue polypeptide: RNA-binding protein Hfq (80 aa).

Residues D10 to V69 form the Sm domain.

The protein belongs to the Hfq family. In terms of assembly, homohexamer.

In terms of biological role, RNA chaperone that binds small regulatory RNA (sRNAs) and mRNAs to facilitate mRNA translational regulation in response to envelope stress, environmental stress and changes in metabolite concentrations. Also binds with high specificity to tRNAs. The polypeptide is RNA-binding protein Hfq (Leptothrix cholodnii (strain ATCC 51168 / LMG 8142 / SP-6) (Leptothrix discophora (strain SP-6))).